We begin with the raw amino-acid sequence, 218 residues long: Putative tRNA methyltransferase MG248 (218 aa).

Belongs to the TrmK family.

The protein localises to the cytoplasm. This is Putative tRNA methyltransferase MG248 from Mycoplasma genitalium (strain ATCC 33530 / DSM 19775 / NCTC 10195 / G37) (Mycoplasmoides genitalium).